The primary structure comprises 574 residues: Sulfate adenylyltransferase (574 aa).

The tract at residues 1–170 (MANAPHGGVL…VQAVSKPAYY (170 aa)) is N-terminal. Positions 171 to 395 (DYVALRYTPA…LRESYPPKAK (225 aa)) are catalytic. Glutamine 198 is a binding site for sulfate. Residues 198 to 201 (QTRN) and 292 to 295 (GRDH) contribute to the ATP site. Active-site residues include threonine 199, arginine 200, and asparagine 201. Arginine 200 contacts sulfate. Position 296 (alanine 296) interacts with sulfate. Residue methionine 334 coordinates ATP. An allosteric regulation domain; adenylyl-sulfate kinase-like region spans residues 396–574 (QGFTLFLTGL…ILLLEAQSLI (179 aa)). Residues 435 to 438 (ETVR), arginine 452, 478 to 479 (IA), and lysine 519 each bind 3'-phosphoadenylyl sulfate.

The protein in the N-terminal section; belongs to the sulfate adenylyltransferase family. It in the C-terminal section; belongs to the APS kinase family. Homohexamer. Dimer of trimers.

The protein localises to the cytoplasm. The catalysed reaction is sulfate + ATP + H(+) = adenosine 5'-phosphosulfate + diphosphate. It functions in the pathway sulfur metabolism; hydrogen sulfide biosynthesis; sulfite from sulfate: step 1/3. With respect to regulation, allosterically inhibited by 3'-phosphoadenosine 5'-phosphosulfate (PAPS). Its function is as follows. Catalyzes the first intracellular reaction of sulfate assimilation, forming adenosine-5'-phosphosulfate (APS) from inorganic sulfate and ATP. Plays an important role in sulfate activation as a component of the biosynthesis pathway of sulfur-containing amino acids. The chain is Sulfate adenylyltransferase from Mycosarcoma maydis (Corn smut fungus).